A 127-amino-acid polypeptide reads, in one-letter code: Basic leucine zipper transcriptional factor ATF-like 3 (127 aa).

The segment at 1–72 (MSQGLPAAGS…LHEEYESLEQ (72 aa)) is disordered. Residues serine 2 and serine 31 each carry the phosphoserine modification. The 64-residue stretch at 35 to 98 (DDRKVRRREK…KHLTEALKEH (64 aa)) folds into the bZIP domain. Positions 37 to 62 (RKVRRREKNRVAAQRSRKKQTQKADK) are basic motif. The span at 58–67 (QKADKLHEEY) shows a compositional bias: basic and acidic residues. The interval 63 to 91 (LHEEYESLEQENTMLRREIGKLTEELKHL) is leucine-zipper.

The protein belongs to the bZIP family. In terms of assembly, heterodimer; heterodimerizes with JUN family proteins. Interacts with JUN.

It localises to the nucleus. Functionally, AP-1 family transcription factor that controls the differentiation of CD8(+) thymic conventional dendritic cells in the immune system. Required for development of CD8-alpha(+) classical dendritic cells (cDCs) and related CD103(+) dendritic cells that cross-present antigens to CD8 T-cells and produce interleukin-12 (IL12) in response to pathogens. Acts via the formation of a heterodimer with JUN family proteins that recognizes and binds DNA sequence 5'-TGA[CG]TCA-3' and regulates expression of target genes. This chain is Basic leucine zipper transcriptional factor ATF-like 3 (BATF3), found in Homo sapiens (Human).